We begin with the raw amino-acid sequence, 422 residues long: Tyrosine--tRNA ligase (422 aa).

Tyr35 contributes to the L-tyrosine binding site. The 'HIGH' region signature appears at Pro40 to His49. L-tyrosine-binding residues include Tyr169 and Gln173. A 'KMSKS' region motif is present at residues Lys229–Thr233. Lys232 contacts ATP. Residues Val352–Val418 form the S4 RNA-binding domain.

It belongs to the class-I aminoacyl-tRNA synthetase family. TyrS type 1 subfamily. Homodimer.

It is found in the cytoplasm. It carries out the reaction tRNA(Tyr) + L-tyrosine + ATP = L-tyrosyl-tRNA(Tyr) + AMP + diphosphate + H(+). Functionally, catalyzes the attachment of tyrosine to tRNA(Tyr) in a two-step reaction: tyrosine is first activated by ATP to form Tyr-AMP and then transferred to the acceptor end of tRNA(Tyr). This Kineococcus radiotolerans (strain ATCC BAA-149 / DSM 14245 / SRS30216) protein is Tyrosine--tRNA ligase.